Reading from the N-terminus, the 531-residue chain is Outer dynein arm-docking complex subunit 4 (531 aa).

3 TPR repeats span residues 15–48, 50–82, and 83–116; these read FSTY…QPEE, NCLV…ENDF, and FKGL…RPEF. The interval 161 to 185 is disordered; it reads KQKAQVKVQKKDSKQQKKVDPERSQ. Residues 169-185 are compositionally biased toward basic and acidic residues; that stretch reads QKKDSKQQKKVDPERSQ. 5 TPR repeats span residues 275–307, 320–353, 360–393, 397–430, and 437–470; these read VKSL…VERW, GSLH…AEKY, SRAL…ANSS, TWLY…ADAA, and LNAC…ARLL. A disordered region spans residues 487 to 531; that stretch reads KQGMEEQQESEQNNDENDNLRADGNTARDEEEEDVHVQRTEEDEG. Positions 492–503 are enriched in acidic residues; it reads EQQESEQNNDEN. Residues 521-531 are compositionally biased toward basic and acidic residues; that stretch reads VHVQRTEEDEG.

Component of the outer dynein arm-docking complex. In the mucociliary epithelium, specifically expressed in ciliated cells.

The protein resides in the cytoplasm. It is found in the cytoskeleton. Its subcellular location is the cilium axoneme. In terms of biological role, component of the outer dynein arm-docking complex (ODA-DC) that mediates outer dynein arms (ODA) binding onto the doublet microtubule. Plays an essential role for the assembly of ODA-DC and in the docking of ODA in ciliary axoneme. Functionally, required for the docking of the outer dynein arm to cilia, hence plays an essential role in cilia motility. The sequence is that of Outer dynein arm-docking complex subunit 4 (odad4) from Xenopus laevis (African clawed frog).